The following is a 269-amino-acid chain: Type II restriction enzyme SfiI (269 aa).

It carries out the reaction Endonucleolytic cleavage of DNA to give specific double-stranded fragments with terminal 5'-phosphates.. Its function is as follows. An F and P subtype restriction enzyme that recognizes the double-stranded sequence 5'-GGCCN(5)GGCC-3' and cleaves before N-9. The protein is Type II restriction enzyme SfiI (sfiIR) of Streptomyces fimbriatus.